Reading from the N-terminus, the 613-residue chain is Dihydroxy-acid dehydratase (613 aa).

D81 contributes to the Mg(2+) binding site. Position 122 (C122) interacts with [2Fe-2S] cluster. The Mg(2+) site is built by D123 and K124. K124 carries the N6-carboxylysine modification. A [2Fe-2S] cluster-binding site is contributed by C197. E493 contributes to the Mg(2+) binding site. S519 functions as the Proton acceptor in the catalytic mechanism.

The protein belongs to the IlvD/Edd family. Homodimer. The cofactor is [2Fe-2S] cluster. It depends on Mg(2+) as a cofactor.

The catalysed reaction is (2R)-2,3-dihydroxy-3-methylbutanoate = 3-methyl-2-oxobutanoate + H2O. It catalyses the reaction (2R,3R)-2,3-dihydroxy-3-methylpentanoate = (S)-3-methyl-2-oxopentanoate + H2O. The protein operates within amino-acid biosynthesis; L-isoleucine biosynthesis; L-isoleucine from 2-oxobutanoate: step 3/4. It functions in the pathway amino-acid biosynthesis; L-valine biosynthesis; L-valine from pyruvate: step 3/4. Its function is as follows. Functions in the biosynthesis of branched-chain amino acids. Catalyzes the dehydration of (2R,3R)-2,3-dihydroxy-3-methylpentanoate (2,3-dihydroxy-3-methylvalerate) into 2-oxo-3-methylpentanoate (2-oxo-3-methylvalerate) and of (2R)-2,3-dihydroxy-3-methylbutanoate (2,3-dihydroxyisovalerate) into 2-oxo-3-methylbutanoate (2-oxoisovalerate), the penultimate precursor to L-isoleucine and L-valine, respectively. This is Dihydroxy-acid dehydratase from Corynebacterium glutamicum (strain R).